The following is a 150-amino-acid chain: Flagellar assembly factor FliW (150 aa).

This sequence belongs to the FliW family. In terms of assembly, interacts with translational regulator CsrA and flagellin(s).

It localises to the cytoplasm. Acts as an anti-CsrA protein, binds CsrA and prevents it from repressing translation of its target genes, one of which is flagellin. Binds to flagellin and participates in the assembly of the flagellum. The sequence is that of Flagellar assembly factor FliW from Leptospira interrogans serogroup Icterohaemorrhagiae serovar Lai (strain 56601).